Reading from the N-terminus, the 406-residue chain is Aspartokinase (406 aa).

One can recognise an ACT domain in the interval 342 to 406 (IIGHGIKNDL…LLKISETGHC (65 aa)).

The protein belongs to the aspartokinase family.

The enzyme catalyses L-aspartate + ATP = 4-phospho-L-aspartate + ADP. Its pathway is amino-acid biosynthesis; L-lysine biosynthesis via DAP pathway; (S)-tetrahydrodipicolinate from L-aspartate: step 1/4. It participates in amino-acid biosynthesis; L-methionine biosynthesis via de novo pathway; L-homoserine from L-aspartate: step 1/3. The protein operates within amino-acid biosynthesis; L-threonine biosynthesis; L-threonine from L-aspartate: step 1/5. This is Aspartokinase (lysC) from Rickettsia bellii (strain RML369-C).